The primary structure comprises 2208 residues: RNA-directed RNA polymerase L (2208 aa).

The tract at residues K26–C284 is endonuclease. E51, D89, and E102 together coordinate Mn(2+). The active site involves K115. One can recognise a RdRp catalytic domain in the interval C1172 to V1370. D1330 serves as a coordination point for Mg(2+).

Belongs to the Bunyavirales RNA polymerase family. As to quaternary structure, homomultimer; the oligomeric structure is essential for the polymerase activity. Interacts with nucleoprotein N. Interacts with protein Z; this interaction inhibits viral transcription and replication, Z partially blocks the product exit tunnel for the releasing nascent RNA product. Mn(2+) serves as cofactor. Mg(2+) is required as a cofactor.

It localises to the virion. The protein resides in the host cytoplasm. It catalyses the reaction RNA(n) + a ribonucleoside 5'-triphosphate = RNA(n+1) + diphosphate. RNA-dependent RNA polymerase, which is responsible for the replication and transcription of the viral RNA genome using antigenomic RNA as an intermediate. During transcription, synthesizes subgenomic RNAs and assures their capping by a cap-snatching mechanism, which involves the endonuclease activity cleaving the host capped pre-mRNAs. These short capped RNAs are then used as primers for viral transcription. The 3'-end of subgenomic mRNAs molecules are heterogeneous and not polyadenylated. The replicase function is to direct synthesis of antigenomic and genomic RNA which are encapsidated and non capped. As a consequence of the use of the same enzyme for both transcription and replication, these mechanisms need to be well coordinated. These processes may be regulated by proteins N and Z in a dose-dependent manner. Z protein inhibits the viral polymerase L und thus the viral transcription and RNA synthesis. In Hylaeamys megacephalus (Large-headed rice rat), this protein is RNA-directed RNA polymerase L.